The following is a 227-amino-acid chain: Uracil-DNA glycosylase 2 (227 aa).

The Proton acceptor role is filled by Asp-67.

It belongs to the uracil-DNA glycosylase (UDG) superfamily. UNG family.

The protein resides in the cytoplasm. It catalyses the reaction Hydrolyzes single-stranded DNA or mismatched double-stranded DNA and polynucleotides, releasing free uracil.. Its function is as follows. Excises uracil residues from the DNA which can arise as a result of misincorporation of dUMP residues by DNA polymerase or due to deamination of cytosine. This is Uracil-DNA glycosylase 2 (ung2) from Streptomyces coelicolor (strain ATCC BAA-471 / A3(2) / M145).